The chain runs to 39 residues: Photosystem II reaction center protein Y (39 aa).

A helical membrane pass occupies residues 4 to 22 (TLVVFAPIIAALAWVIFNI).

This sequence belongs to the PsbY family. In terms of assembly, PSII is composed of 1 copy each of membrane proteins PsbA, PsbB, PsbC, PsbD, PsbE, PsbF, PsbH, PsbI, PsbJ, PsbK, PsbL, PsbM, PsbT, PsbX, PsbY, Psb30/Ycf12, peripheral proteins PsbO, CyanoQ (PsbQ), PsbU, PsbV and a large number of cofactors. It forms dimeric complexes.

It is found in the cellular thylakoid membrane. Functionally, loosely associated component of the core of photosystem II (PSII), it is not always seen in crystals. PSII is a light-driven water plastoquinone oxidoreductase, using light energy to abstract electrons from H(2)O, generating a proton gradient subsequently used for ATP formation. The sequence is that of Photosystem II reaction center protein Y from Prochlorococcus marinus (strain MIT 9515).